Consider the following 98-residue polypeptide: Transcription elongation factor A protein-like 7 (98 aa).

The segment covering 1–22 has biased composition (basic and acidic residues); it reads MQKSCNEKEGKPKGSEAKREDE. Residues 1–33 form a disordered region; it reads MQKSCNEKEGKPKGSEAKREDEQPCGALEGQRL. A coiled-coil region spans residues 59-89; it reads GEEMTGEEEEMERCLEEIRSLRKKFRALHSN.

This sequence belongs to the TFS-II family. TFA subfamily.

Its subcellular location is the nucleus. Plays a role in the negative regulation of NF-kappa-B signaling at the basal level by modulating transcriptional activity of NF-kappa-B on its target gene promoters. Associates with cyclin D1 promoter containing Myc E-box sequence and transcriptionally represses cyclin D1 expression. Regulates telomerase reverse transcriptase expression and telomerase activity in both ALT (alternative lengthening of telomeres)and telomerase-positive cell lines. The polypeptide is Transcription elongation factor A protein-like 7 (Tceal7) (Mus musculus (Mouse)).